A 286-amino-acid chain; its full sequence is Bifunctional protein FolD (286 aa).

NADP(+) contacts are provided by residues 164-166 (GAS), Ile189, and Ile230.

Belongs to the tetrahydrofolate dehydrogenase/cyclohydrolase family. In terms of assembly, homodimer.

It carries out the reaction (6R)-5,10-methylene-5,6,7,8-tetrahydrofolate + NADP(+) = (6R)-5,10-methenyltetrahydrofolate + NADPH. The enzyme catalyses (6R)-5,10-methenyltetrahydrofolate + H2O = (6R)-10-formyltetrahydrofolate + H(+). It functions in the pathway one-carbon metabolism; tetrahydrofolate interconversion. Its function is as follows. Catalyzes the oxidation of 5,10-methylenetetrahydrofolate to 5,10-methenyltetrahydrofolate and then the hydrolysis of 5,10-methenyltetrahydrofolate to 10-formyltetrahydrofolate. The polypeptide is Bifunctional protein FolD (Wolinella succinogenes (strain ATCC 29543 / DSM 1740 / CCUG 13145 / JCM 31913 / LMG 7466 / NCTC 11488 / FDC 602W) (Vibrio succinogenes)).